The chain runs to 387 residues: Succinate--CoA ligase [ADP-forming] subunit beta (387 aa).

ATP is bound by residues Lys46, 53–55 (GRG), Glu99, Ala102, and Glu107. Mg(2+)-binding residues include Asn199 and Asp213. Residues Asn264 and 321–323 (GIV) contribute to the substrate site.

This sequence belongs to the succinate/malate CoA ligase beta subunit family. Heterotetramer of two alpha and two beta subunits. Requires Mg(2+) as cofactor.

It catalyses the reaction succinate + ATP + CoA = succinyl-CoA + ADP + phosphate. The catalysed reaction is GTP + succinate + CoA = succinyl-CoA + GDP + phosphate. Its pathway is carbohydrate metabolism; tricarboxylic acid cycle; succinate from succinyl-CoA (ligase route): step 1/1. Succinyl-CoA synthetase functions in the citric acid cycle (TCA), coupling the hydrolysis of succinyl-CoA to the synthesis of either ATP or GTP and thus represents the only step of substrate-level phosphorylation in the TCA. The beta subunit provides nucleotide specificity of the enzyme and binds the substrate succinate, while the binding sites for coenzyme A and phosphate are found in the alpha subunit. This chain is Succinate--CoA ligase [ADP-forming] subunit beta, found in Campylobacter jejuni subsp. jejuni serotype O:23/36 (strain 81-176).